The following is a 745-amino-acid chain: DEAD-box ATP-dependent RNA helicase 3A, chloroplastic (745 aa).

A chloroplast-targeting transit peptide spans 1–41; sequence MASLVTLPAIAFSNPATASGAVRLRAAAFRCWALRRRGWAV. A Q motif motif is present at residues 88–116; it reads LAIARLGLPDELVATLEKRGITHLFPIQR. The Helicase ATP-binding domain occupies 119-295; the sequence is LIPALGGRDL…RRYLNNPLTI (177 aa). An ATP-binding site is contributed by 132–139; the sequence is AKTGTGKT. Residues 243–246 carry the DEAD box motif; that stretch reads DEAD. The 146-residue stretch at 324-469 folds into the Helicase C-terminal domain; the sequence is ILSDLITVYA…ISPPSIEEVL (146 aa). The interval 606-724 is disordered; it reads LTKISKLPAL…SLGGRESSRS (119 aa). Positions 641–650 are enriched in gly residues; the sequence is GGGASRGRGG. Positions 656-670 are enriched in basic and acidic residues; that stretch reads EDRYRRGGRSLRSDN. A compositionally biased stretch (low complexity) spans 687 to 724; the sequence is RSSSSFGGRSSSYGSRGSPSPSFGVRSSSLGGRESSRS. The segment at 727-744 adopts a CCHC-type zinc-finger fold; it reads GACFNCGESGHRASDCPN.

This sequence belongs to the DEAD box helicase family. DDX21/DDX50 subfamily.

It is found in the plastid. The protein localises to the chloroplast. The enzyme catalyses ATP + H2O = ADP + phosphate + H(+). Its function is as follows. Nuclear genome-encoded factor involved in ribosome biogenesis in chloroplasts. Binds specific group II introns in chloroplasts and facilitates their splicing. Required for normal development of chloroplasts. The polypeptide is DEAD-box ATP-dependent RNA helicase 3A, chloroplastic (Zea mays (Maize)).